The following is a 457-amino-acid chain: Adenylosuccinate synthetase isozyme 1 (457 aa).

A disordered region spans residues 1–24; it reads MSGTRASNDRPPGTGGVKRGRLQQ. GTP is bound by residues 42–48 and 70–72; these read GDEGKGK and GHT. D43 serves as the catalytic Proton acceptor. The Mg(2+) site is built by D43 and G70. D43 is a binding site for substrate. Residues 43–46, 68–71, T163, R177, N256, T271, and R335 each bind IMP; these read DEGK and NAGH. The active-site Proton donor is the H71. Substrate is bound at residue 331–337; it reads VTTGRKR. Residues R337, 363 to 365, and 445 to 448 each bind GTP; these read KLD and GVGK.

This sequence belongs to the adenylosuccinate synthetase family. Homodimer. Mg(2+) is required as a cofactor. In terms of tissue distribution, high levels in muscle.

The protein localises to the cytoplasm. The protein resides in the membrane. The catalysed reaction is IMP + L-aspartate + GTP = N(6)-(1,2-dicarboxyethyl)-AMP + GDP + phosphate + 2 H(+). Its pathway is purine metabolism; AMP biosynthesis via de novo pathway; AMP from IMP: step 1/2. Weakly inhibited by AMP non-competitively to all substrates. Inhibited by IMP non-competitively with respect to GTP. Inhibited by fructose 1,6-bisphosphate competitively with respect to IMP. Functionally, component of the purine nucleotide cycle (PNC), which interconverts IMP and AMP to regulate the nucleotide levels in various tissues, and which contributes to glycolysis and ammoniagenesis. Catalyzes the first committed step in the biosynthesis of AMP from IMP. This chain is Adenylosuccinate synthetase isozyme 1 (Adss1), found in Mus musculus (Mouse).